We begin with the raw amino-acid sequence, 151 residues long: Deoxyuridine 5'-triphosphate nucleotidohydrolase (151 aa).

Residues 70-72 (RSG), Asn-83, 87-89 (LID), and Met-97 each bind substrate.

It belongs to the dUTPase family. It depends on Mg(2+) as a cofactor.

It carries out the reaction dUTP + H2O = dUMP + diphosphate + H(+). Its pathway is pyrimidine metabolism; dUMP biosynthesis; dUMP from dCTP (dUTP route): step 2/2. Its function is as follows. This enzyme is involved in nucleotide metabolism: it produces dUMP, the immediate precursor of thymidine nucleotides and it decreases the intracellular concentration of dUTP so that uracil cannot be incorporated into DNA. This chain is Deoxyuridine 5'-triphosphate nucleotidohydrolase, found in Actinobacillus pleuropneumoniae serotype 7 (strain AP76).